A 210-amino-acid polypeptide reads, in one-letter code: Thymidylate kinase (210 aa).

9–16 (GLEGAGKS) provides a ligand contact to ATP.

It belongs to the thymidylate kinase family.

It carries out the reaction dTMP + ATP = dTDP + ADP. In terms of biological role, phosphorylation of dTMP to form dTDP in both de novo and salvage pathways of dTTP synthesis. This chain is Thymidylate kinase, found in Aliivibrio fischeri (strain ATCC 700601 / ES114) (Vibrio fischeri).